Consider the following 2591-residue polypeptide: Eukaryotic translation initiation factor 2-alpha kinase PK4 (2591 aa).

The Cytoplasmic segment spans residues 1 to 16 (MYNKGINICLNEDNKC). The helical transmembrane segment at 17–37 (IILLHIIFNKCIVSFVASHIL) threads the bilayer. Residues 38–1488 (VEGKICFLNR…EFSSQKHKKS (1451 aa)) lie on the Lumenal side of the membrane. The segment at 1028–1048 (KKKRNSKKGENRNKKRKTQKR) is disordered. Residues 1489–1509 (WYWNIFYAITLVIVIPFIFIY) form a helical membrane-spanning segment. Residues 1510–2591 (RLFKKQTNNK…NIINGNEVDH (1082 aa)) lie on the Cytoplasmic side of the membrane. Residues 1781–1840 (NLNSADEENKSPYAKKYSDEKKNRSKSSKYIENTQSNNNDNTNGNMNVGNHINNDKMNNK) form a disordered region. Low complexity predominate over residues 1813–1832 (NTQSNNNDNTNGNMNVGNHI). ATP-binding positions include 1880–1888 (IGQGGFGSV) and Lys-1905. Disordered stretches follow at residues 2123 to 2157 (DNDESNGSGHSKKNDNDERKSLNNQNGIYNTGGDI) and 2183 to 2212 (IKNTQGTSINGTINRNTISDETGTQGTNNN). Over residues 2134–2143 (KKNDNDERKS) the composition is skewed to basic and acidic residues. Positions 2181 to 2532 (MTIKNTQGTS…KIKVLLDPHL (352 aa)) constitute a Protein kinase domain. The active-site Proton acceptor is Asp-2369. Thr-2436 is modified (phosphothreonine; by autocatalysis). Over residues 2558 to 2574 (STNPNGDIKENVNQNNL) the composition is skewed to polar residues. The tract at residues 2558–2591 (STNPNGDIKENVNQNNLVDDKGNNNIINGNEVDH) is disordered. The span at 2580 to 2591 (NNNIINGNEVDH) shows a compositional bias: low complexity.

This sequence belongs to the protein kinase superfamily. Ser/Thr protein kinase family. GCN2 subfamily. As to quaternary structure, may form oligomers in response to stress; oligomerization may result in catalytic activity. Interacts with BIP; the interaction is disrupted in response to stress.

It is found in the endoplasmic reticulum membrane. The catalysed reaction is L-seryl-[protein] + ATP = O-phospho-L-seryl-[protein] + ADP + H(+). It catalyses the reaction L-threonyl-[protein] + ATP = O-phospho-L-threonyl-[protein] + ADP + H(+). Dissociation from BIP and oligomerization, may results autophosphorylation and kinase activity induction. Its function is as follows. During the asexual blood stage, phosphorylates translation factor eIF2alpha in late schizonts resulting in protein translation inhibition. Plays a role in trophozoite differentiation into schizonts. The polypeptide is Eukaryotic translation initiation factor 2-alpha kinase PK4 (Plasmodium berghei (strain Anka)).